A 354-amino-acid polypeptide reads, in one-letter code: Ion-translocating oxidoreductase complex subunit D (354 aa).

5 helical membrane-spanning segments follow: residues 19 to 39 (IMLW…YYFG), 40 to 60 (FGVL…EFLV), 70 to 89 (FYIS…VAIP), 94 to 116 (YWII…GGLG), and 123 to 143 (AMVG…TWLA). FMN phosphoryl threonine is present on T186. A run of 5 helical transmembrane segments spans residues 215-235 (LAGL…LFLV), 242-262 (WQIP…SWLF), 266-286 (MPSP…FFIA), 300-320 (LVFG…GGYP), and 321-341 (DGAA…DQYT).

Belongs to the NqrB/RnfD family. In terms of assembly, the complex is composed of six subunits: RnfA, RnfB, RnfC, RnfD, RnfE and RnfG. FMN serves as cofactor.

The protein localises to the cell inner membrane. In terms of biological role, part of a membrane-bound complex that couples electron transfer with translocation of ions across the membrane. In Mannheimia succiniciproducens (strain KCTC 0769BP / MBEL55E), this protein is Ion-translocating oxidoreductase complex subunit D.